Reading from the N-terminus, the 26-residue chain is MLQMRATLAFLGQTLTYNTSCQRRQK.

This is an uncharacterized protein from Saccharomyces cerevisiae (strain ATCC 204508 / S288c) (Baker's yeast).